A 629-amino-acid polypeptide reads, in one-letter code: MFYPDHFDVIIIGGGHAGTEAAMASARMGCQTLLLTHNIDTLGQMSCNPAIGGIGKGHLVKEIDAMGGLMAQAIDKGGIQFRILNASKGPAVRATRAQADRVLYRQAVRGALENQPNLMIFQQAVEDLIMEGDRVVGAVTQIGLKFRARAVVLTVGTFLDGKIHIGMDHYSGGRAGDPPSVSLSRRLRELPFRVNRLKTGTPPRIDAHSIDFSRLATQHGDDPLPVFSFLGSADQHPRQIPCYITYTNDKTHEVIRQNLDRSPMYAGIIEGVGPRYCPSIEDKVMRFADRDAHQIFLEPEGLTSNEIYPNGISTSLPFDVQMKIVHSMQGLENARIVRPGYAIEYDFFDPRDLKLTLESKLIEGLFFAGQINGTTGYEEAAAQGMLAGLNAARLAMGKDGWSPRRDQAYLGVLVDDLCTLGTKEPYRMFTSRAEYRLLLREDNADLRLTETGRQLGMVDDVRWERFCAKQEQIERERQRLRDIWVHPGSDGVEQLNPLLKASLTREANGEELLRRPEMDYARLTHLERFGPALVDSQAAEQVEIQIKYQGYIARQQEEIARQMRNEHTLLPAAMDFSTVSGLSNEVIAKLNDHKPNSIGQASRISGVTPAAISILLVWLKKQGLRHRSP.

FAD-binding positions include 13 to 18 (GGGHAG), V125, and S180. NAD(+) is bound at residue 273 to 287 (GPRYCPSIEDKVMRF). Residue Q370 coordinates FAD.

Belongs to the MnmG family. Homodimer. Heterotetramer of two MnmE and two MnmG subunits. Requires FAD as cofactor.

The protein localises to the cytoplasm. Its function is as follows. NAD-binding protein involved in the addition of a carboxymethylaminomethyl (cmnm) group at the wobble position (U34) of certain tRNAs, forming tRNA-cmnm(5)s(2)U34. In Sodalis glossinidius (strain morsitans), this protein is tRNA uridine 5-carboxymethylaminomethyl modification enzyme MnmG.